A 470-amino-acid polypeptide reads, in one-letter code: GDP-Man:Man(3)GlcNAc(2)-PP-Dol alpha-1,2-mannosyltransferase (470 aa).

Topologically, residues 1–15 (MSDTVISLISHSITT) are lumenal. Residues 16–36 (VFYLVPLIIALIIPFSLYSGF) traverse the membrane as a helical segment. Topologically, residues 37–131 (RRKSKTVAFF…HYKHCTMLFQ (95 aa)) are cytoplasmic. The segment at residues 132-152 (ALAGLILALEAWFRMVPAVFI) is an intramembrane region (helical). At 153 to 378 (DSMGYPLSLP…ISIHTMHNEH (226 aa)) the chain is on the cytoplasmic side. The segment at residues 379 to 399 (FGISVVEAMAASTIILSNDSG) is an intramembrane region (helical). The Cytoplasmic portion of the chain corresponds to 400–470 (GPRMDIVKDY…HWNKEIEKVL (71 aa)).

It belongs to the glycosyltransferase group 1 family. Glycosyltransferase 4 subfamily.

The protein localises to the endoplasmic reticulum membrane. The enzyme catalyses an alpha-D-Man-(1-&gt;3)-[alpha-D-Man-(1-&gt;6)]-beta-D-Man-(1-&gt;4)-beta-D-GlcNAc-(1-&gt;4)-alpha-D-GlcNAc-diphospho-di-trans,poly-cis-dolichol + 2 GDP-alpha-D-mannose = an alpha-D-Man-(1-&gt;2)-alpha-D-Man-(1-&gt;2)-alpha-D-Man-(1-&gt;3)-[alpha-D-Man-(1-&gt;6)]-beta-D-Man-(1-&gt;4)-beta-D-GlcNAc-(1-&gt;4)-alpha-D-GlcNAc-diphospho-di-trans,poly-cis-dolichol + 2 GDP + 2 H(+). It functions in the pathway protein modification; protein glycosylation. GDP-Man:Man(3)GlcNAc(2)-PP-Dol alpha-1,2-mannosyltransferase that operates in the biosynthetic pathway of dolichol-linked oligosaccharides, the glycan precursors employed in protein asparagine (N)-glycosylation. The assembly of dolichol-linked oligosaccharides begins on the cytosolic side of the endoplasmic reticulum membrane and finishes in its lumen. The sequential addition of sugars to dolichol pyrophosphate produces dolichol-linked oligosaccharides containing fourteen sugars, including two GlcNAcs, nine mannoses and three glucoses. Once assembled, the oligosaccharide is transferred from the lipid to nascent proteins by oligosaccharyltransferases. Catalyzes, on the cytoplasmic face of the endoplasmic reticulum, the addition of the fourth and fifth mannose residues to the dolichol-linked oligosaccharide chain, to produce Man(5)GlcNAc(2)-PP-dolichol core oligosaccharide. Man(5)GlcNAc(2)-PP-dolichol is a substrate for ALG3, the following enzyme in the biosynthetic pathway. In Caenorhabditis elegans, this protein is GDP-Man:Man(3)GlcNAc(2)-PP-Dol alpha-1,2-mannosyltransferase.